The following is an 88-amino-acid chain: Small ribosomal subunit protein uS17 (88 aa).

It belongs to the universal ribosomal protein uS17 family. In terms of assembly, part of the 30S ribosomal subunit.

Functionally, one of the primary rRNA binding proteins, it binds specifically to the 5'-end of 16S ribosomal RNA. The protein is Small ribosomal subunit protein uS17 of Lawsonia intracellularis (strain PHE/MN1-00).